The chain runs to 345 residues: S-adenosylmethionine:tRNA ribosyltransferase-isomerase (345 aa).

It belongs to the QueA family. In terms of assembly, monomer.

It localises to the cytoplasm. It catalyses the reaction 7-aminomethyl-7-carbaguanosine(34) in tRNA + S-adenosyl-L-methionine = epoxyqueuosine(34) in tRNA + adenine + L-methionine + 2 H(+). The protein operates within tRNA modification; tRNA-queuosine biosynthesis. Transfers and isomerizes the ribose moiety from AdoMet to the 7-aminomethyl group of 7-deazaguanine (preQ1-tRNA) to give epoxyqueuosine (oQ-tRNA). The polypeptide is S-adenosylmethionine:tRNA ribosyltransferase-isomerase (Acidithiobacillus ferrooxidans (strain ATCC 53993 / BNL-5-31) (Leptospirillum ferrooxidans (ATCC 53993))).